Here is a 2049-residue protein sequence, read N- to C-terminus: Nonribosomal peptide synthetase tcpP (2049 aa).

The interval 13 to 395 is adenylation 1; sequence RHHAEAHPEA…LGRKDQLIKN (383 aa). The 77-residue stretch at 497 to 573 folds into the Carrier 1 domain; it reads ATADTKLSAL…EISNHIIEFD (77 aa). Ser-534 is subject to O-(pantetheine 4'-phosphoryl)serine. The interval 605 to 913 is condensation 1; sequence REITMTDVQR…ALGSKMDLLS (309 aa). The interval 1071 to 1452 is adenylation 2; that stretch reads VAAWPMSVAL…GRADHQVKVR (382 aa). The Carrier 2 domain occupies 1550-1625; it reads DHTELVVSQV…SLAASVKKHL (76 aa). Ser-1585 is subject to O-(pantetheine 4'-phosphoryl)serine. The tract at residues 1662–2044 is condensation 2; sequence MHKQASNPSS…FEQEICNLLD (383 aa).

Belongs to the NRP synthetase family.

The protein operates within secondary metabolite biosynthesis. Nonribosomal peptide synthetase; part of the gene cluster that mediates the biosynthesis of an unusual class of epipolythiodioxopiperazines (ETPs) lacking the reactive thiol group important for toxicity. Firstly, L-tyrosine is prenylated by tcpD, before undergoing condensation with L-glycine in a reaction catalyzed by the NRPS tcpP leading to the diketopiperazine (DKP) backbone. Afterwards the alpha-carbon of tyrosine is oxidized by the cytochrome P450 tcpC to form a hydroxyl group. However, in contrast other ETP biosynthesis pathways studied so far, tcpC is not able to bishydroxylate the DKP at both alpha-carbon positions, but hydroxylates the alpha-carbon of the tyrosine part and the nitrogen of the glycine part. The next steps involve an alpha,beta-elimination reaction catalyzed by tcpI, a methylation by the methyltransferase tcpN the action of the four enzyme cascade tcpG/K/J/I. Due to a dysfunctional cytochrome P450 monooxygenase tcpC, the pathway leads to the biosynthesis of probable non-toxic metabolites lacking the reactive thiol group. The chain is Nonribosomal peptide synthetase tcpP from Claviceps purpurea (strain 20.1) (Ergot fungus).